The primary structure comprises 61 residues: MAKQKGNRIQVILECTEHRKSGMPGISRYSTEKNRKNTSDRLVLKKYNPILKKYTLHKEIK.

The protein belongs to the bacterial ribosomal protein bL33 family.

The polypeptide is Large ribosomal subunit protein bL33 (Amoebophilus asiaticus (strain 5a2)).